The chain runs to 509 residues: ATP synthase subunit alpha (509 aa).

Residue 169-176 (GDRQTGKT) participates in ATP binding.

The protein belongs to the ATPase alpha/beta chains family. As to quaternary structure, F-type ATPases have 2 components, CF(1) - the catalytic core - and CF(0) - the membrane proton channel. CF(1) has five subunits: alpha(3), beta(3), gamma(1), delta(1), epsilon(1). CF(0) has three main subunits: a(1), b(2) and c(9-12). The alpha and beta chains form an alternating ring which encloses part of the gamma chain. CF(1) is attached to CF(0) by a central stalk formed by the gamma and epsilon chains, while a peripheral stalk is formed by the delta and b chains.

The protein localises to the cell inner membrane. The enzyme catalyses ATP + H2O + 4 H(+)(in) = ADP + phosphate + 5 H(+)(out). Its function is as follows. Produces ATP from ADP in the presence of a proton gradient across the membrane. The alpha chain is a regulatory subunit. The protein is ATP synthase subunit alpha of Parvibaculum lavamentivorans (strain DS-1 / DSM 13023 / NCIMB 13966).